Here is a 369-residue protein sequence, read N- to C-terminus: MPSDFPPGQAGIHARFRVDYPEFSLDVDLRLPGRGVTALFGQSGSGKTTCLRCMAGLAPVSDGYLDINGEVWLDSAARRAVPTHKRALGYVFQEASLFEHLDVLANLRYGMKRVPPALRRVDLEQATGLLGIGHLLARMPAGLSGGERQRVGIARALLTSPRLLLMDEPLAALDVQRKREILPYLERLHDELDIPVIYVSHSPDEVARLADHLVLLEQGRAVASGPLDALLTRLDLPMAMTDDASVVVTGEAAGFDPGYALLTLQLPGGRARLRFVHQAAPAGQRLRVVVHARDVSLALQQPREGSILNVLAVRVLEMAPAANPAHVMVRLDADGTPLLARITRYSRDRLALAPGMQAWAQIKAVSLLA.

Positions 7–243 (PGQAGIHARF…LDLPMAMTDD (237 aa)) constitute an ABC transporter domain. An ATP-binding site is contributed by 41 to 48 (GQSGSGKT). The 66-residue stretch at 304–369 (EGSILNVLAV…AQIKAVSLLA (66 aa)) folds into the Mop domain.

The protein belongs to the ABC transporter superfamily. Molybdate importer (TC 3.A.1.8) family. As to quaternary structure, the complex is composed of two ATP-binding proteins (ModC), two transmembrane proteins (ModB) and a solute-binding protein (ModA).

The protein localises to the cell inner membrane. The catalysed reaction is molybdate(out) + ATP + H2O = molybdate(in) + ADP + phosphate + H(+). In terms of biological role, part of the ABC transporter complex ModABC involved in molybdenum import. Responsible for energy coupling to the transport system. In Bordetella bronchiseptica (strain ATCC BAA-588 / NCTC 13252 / RB50) (Alcaligenes bronchisepticus), this protein is Molybdenum import ATP-binding protein ModC.